Consider the following 363-residue polypeptide: UDP-3-O-acylglucosamine N-acyltransferase (363 aa).

The Proton acceptor role is filled by H237. Positions 338-363 (EQNSTDRAPNAKMLEVGVDPETTCSS) are disordered.

Belongs to the transferase hexapeptide repeat family. LpxD subfamily. As to quaternary structure, homotrimer.

The catalysed reaction is a UDP-3-O-[(3R)-3-hydroxyacyl]-alpha-D-glucosamine + a (3R)-hydroxyacyl-[ACP] = a UDP-2-N,3-O-bis[(3R)-3-hydroxyacyl]-alpha-D-glucosamine + holo-[ACP] + H(+). The protein operates within bacterial outer membrane biogenesis; LPS lipid A biosynthesis. In terms of biological role, catalyzes the N-acylation of UDP-3-O-acylglucosamine using 3-hydroxyacyl-ACP as the acyl donor. Is involved in the biosynthesis of lipid A, a phosphorylated glycolipid that anchors the lipopolysaccharide to the outer membrane of the cell. This chain is UDP-3-O-acylglucosamine N-acyltransferase, found in Synechococcus sp. (strain JA-2-3B'a(2-13)) (Cyanobacteria bacterium Yellowstone B-Prime).